The sequence spans 441 residues: MIGYQIYVRSFRDGNLDGVGDFRGLKNAVSYLKELGIDFVWLMPVFSSISFHGYDVVDFYSFKAEYGSEREFKEMIEAFHDSGIKVVLDLPIHHTGFLHTWFQKALKGDPHYRDYYVWANKETDLDERREWDGEKIWHPLEDGRFYRGLFGPFSPDLNYDNPQVFDEMKRLVLHLLDMGVDGFRFDAAKHMRDTIEQNVRFWKYFLSDLKGIFLAEIWAEARMVDEHGRIFGYMLNFDTSHCIKEAVWKENTRVLIESIERAVIGKDYLPVNFTSNHDMSRLASFEGGFSKEKIKLSISILFTLPGVPLVFYGDELGMKGVYQKPNTEVVLDPFPWNESMCVEGQTFWKWPAYNGPFSGISVEYQKRDPDSILSHTLGWTRFRKENQWIDRAKLEFLCKEDKFLVYRLYDDQHSLKVFHNLSGEEVVFEGVKMKPYKTEVV.

Positions 13, 15, 17, 19, and 21 each coordinate Ca(2+). D186 acts as the Nucleophile in catalysis. E216 serves as the catalytic Proton donor.

Belongs to the glycosyl hydrolase 13 family. Monomer. Ca(2+) is required as a cofactor.

It localises to the cytoplasm. It carries out the reaction Transfers a segment of a (1-&gt;4)-alpha-D-glucan to a new position in an acceptor, which may be glucose or a (1-&gt;4)-alpha-D-glucan.. The chain is 4-alpha-glucanotransferase (mgtA) from Thermotoga maritima (strain ATCC 43589 / DSM 3109 / JCM 10099 / NBRC 100826 / MSB8).